A 184-amino-acid polypeptide reads, in one-letter code: Ribosome-recycling factor (184 aa).

It belongs to the RRF family.

The protein localises to the cytoplasm. Its function is as follows. Responsible for the release of ribosomes from messenger RNA at the termination of protein biosynthesis. May increase the efficiency of translation by recycling ribosomes from one round of translation to another. The polypeptide is Ribosome-recycling factor (Fervidobacterium nodosum (strain ATCC 35602 / DSM 5306 / Rt17-B1)).